A 338-amino-acid polypeptide reads, in one-letter code: MLSERRLEVLRAIVQDYVGTEEPVGSKALTERHRLGVSPATVRNDMAALEDEGYIAQPHTSAGPIPTDKGYRLFVDRLADVKPMTAPERRAIHHFLDQAVDLDDVVARTVRLLAHVTRQVAVVQYPSLTRSTVRHVELLSMAPARLMLVLITDTGRVEQRMIDCPAPFGESSVADLRARLNSQVAGRRFADVPQLVQDLPESFESEDRPTVSTVLSTLLETLVEETEERLMIGGTANLTRFGHDFPLTIRPVLEALEEQVVLLKLLGEAKDSAMTVRIGHENAHEGLSSTSVVSVGYGSGREAVAKLGVVGPTRMDYPGTMGAVRAVARYVGQILAES.

The protein belongs to the HrcA family.

In terms of biological role, negative regulator of class I heat shock genes (grpE-dnaK-dnaJ and groELS operons). Prevents heat-shock induction of these operons. The polypeptide is Heat-inducible transcription repressor HrcA (Streptomyces albus G).